The sequence spans 1315 residues: Chaoptin (1315 aa).

The N-terminal stretch at 1–29 is a signal peptide; that stretch reads MGLEFFFKFGYAFLTITLMIMIWMSLARA. A glycan (N-linked (GlcNAc...) (high mannose) asparagine; alternate) is linked at Asn77. A glycan (N-linked (GlcNAc...) (paucimannose) asparagine; alternate) is linked at Asn77. LRR repeat units follow at residues 80 to 101, 103 to 124, 128 to 149, 152 to 173, 177 to 198, 201 to 222, 226 to 247, 250 to 271, and 279 to 300; these read KVFMLHMENTGLREIEPYFLQS, GMYRLKISGNHLTEIPDDAFTG, SLWELILPQNDLVEIPSKSLRH, KLRHLDLGYNHITHIQHDSFRG, SLQTLILRENCISQLMSHSFSG, ILETLDLSGNNLFEIDPNVFVD, RLTRLLLTDNILSEIPYDALGP, SLRTLDISHNVIWSLSGNETYE, and NLDNLHLEYNHIEVLPPNSFKY. Asn267 carries N-linked (GlcNAc...) (paucimannose) asparagine; alternate glycosylation. Residue Asn267 is glycosylated (N-linked (GlcNAc...) (complex) asparagine; alternate). A glycan (N-linked (GlcNAc...) (high mannose) asparagine; alternate) is linked at Asn305. N-linked (GlcNAc...) (paucimannose) asparagine; alternate glycosylation occurs at Asn305. LRR repeat units lie at residues 326 to 347, 351 to 372, 375 to 396, 401 to 424, 477 to 498, 527 to 548, 551 to 572, 577 to 598, 601 to 622, 625 to 646, 649 to 670, 676 to 696, 708 to 729, 733 to 754, 757 to 778, 781 to 802, 805 to 826, 828 to 849, 854 to 875, 879 to 900, 903 to 924, 928 to 948, 949 to 970, 973 to 994, 996 to 1017, 1021 to 1044, and 1045 to 1066; these read RIREIYMRYCGLTNISPVAFDS, SLQILDLSGNNLTKLHHKLFNN, VLRVISMRDNKIKIQKPTETFN, TLLKLDLSGDRNDPTNLQTLRNMT, GLKRLDFSENGISSIENDAFHE, SLQELDFSNNHISSMSDTSFHF, NLRLLELHDNRIEQVLKGTFQG, KLEEISLRFNHLTSISQHTFFD, ALRKLHLDDNKIDKIERRAFMN, ELEYLSLRGNKINNLADESFQN, KLEILDMAFNQLPNFNFDYFDQ, NLNVNVSHNQIRQLMYNSSWS, NIKILDLSHNNISIIHPGYFRP, SLTHLHLGYNSLMNTTRDVFGN, HLQWLDLSYNWIHELDFDAFKN, QLQLVFFGHNYLSDIPQDIFKP, GLRIVDFSHNHLRGLPDNLFYN, GMEKLDVSHNMMLKIPSSSLSS, TLCELHLSNNFISTIHSMDLSN, SLRYLDISYNYLLRIDDAVFAT, KLAVLDLSHNRDLKVMDKSFMG, SLIKLGLENISLSTVPEIRLK, YLREFRLGYNELPSIPQELAHN, NLRMLDLSNNDLTNVPLMTQAL, HLRRLMLSGNPITSLNNNSFDG, DLEMLDISNFRLHYFEYGCLDSLP, and HLRSLKLTAYSHLEHFNIPHLL. A glycan (N-linked (GlcNAc...) (high mannose) asparagine) is linked at Asn361. N-linked (GlcNAc...) asparagine glycosylation is present at Asn422. Asn680 is a glycosylation site (N-linked (GlcNAc...) (high mannose) asparagine). The N-linked (GlcNAc...) (high mannose) asparagine; alternate glycan is linked to Asn692. Asn692 is a glycosylation site (N-linked (GlcNAc...) (paucimannose) asparagine; alternate). The N-linked (GlcNAc...) (high mannose) asparagine glycan is linked to Asn718. A glycan (N-linked (GlcNAc...) asparagine) is linked at Asn746. Asn936 is a glycosylation site (N-linked (GlcNAc...) (high mannose) asparagine). Residue Asn970 is glycosylated (N-linked (GlcNAc...) (paucimannose) asparagine). Residue Asn1012 is glycosylated (N-linked (GlcNAc...) (complex) asparagine). Asn1122, Asn1152, and Asn1171 each carry an N-linked (GlcNAc...) (high mannose) asparagine glycan. The 64-residue stretch at 1211 to 1274 folds into the LRRCT domain; sequence TDLNCDCDLG…DDLRETRCEN (64 aa).

This sequence belongs to the chaoptin family. As to expression, expressed in photoreceptor cells and their axons in the adult retina, the ocellus and larval photoreceptor organ.

The protein localises to the cell membrane. Functionally, required for photoreceptor cell morphogenesis. Mediates homophilic cellular adhesion. This is Chaoptin (chp) from Drosophila melanogaster (Fruit fly).